Reading from the N-terminus, the 77-residue chain is Major pilus subunit operon regulatory protein (77 aa).

The protein to E.coli AfaF and DaaF.

Its function is as follows. Plays a role in the inhibition of methylation at the GATC1028 site located in the regulatory region upstream of the pabA promoter. May, in conjunction with the Mbf (methylation blocking factor), inhibits deoxyadenosine methylase from methylating the GATC1028 site. The chain is Major pilus subunit operon regulatory protein (papI) from Escherichia coli.